A 402-amino-acid chain; its full sequence is SH3 and cysteine-rich domain-containing protein (402 aa).

The interval 1 to 47 is disordered; the sequence is MIPPSSPREDGVDGLPKEAVGAEQPPSPASTSSQESKLQKLKRSLSF. The Phorbol-ester/DAG-type zinc finger occupies 107 to 159; sequence AHAFQEYIFKKPTFCDVCNHMIVGTNAKHGLRCKACKMSIHHKCTDGLAPQRC. The segment at 211–247 is disordered; that stretch reads QRTKKGSSGSGSDSPHRTSTSDLVEVPEEANGPGGGY. SH3 domains follow at residues 285–344 and 347–402; these read LQMN…RLQQ and KIFR…LENI.

In terms of assembly, interacts (via SH3 domains) with CACNA1S. Interacts with CACNA1H. Interacts with CACNA1C.

The protein localises to the cytoplasm. It is found in the cytosol. Its subcellular location is the cell membrane. It localises to the sarcolemma. Promotes expression of the ion channel CACNA1H at the cell membrane, and thereby contributes to the regulation of channel activity. Plays a minor and redundant role in promoting the expression of calcium channel CACNA1S at the cell membrane, and thereby contributes to increased channel activity. Slows down the inactivation rate of the calcium channel CACNA1C. The chain is SH3 and cysteine-rich domain-containing protein (STAC) from Homo sapiens (Human).